The primary structure comprises 334 residues: Malate dehydrogenase (334 aa).

16-22 (GAAGQIA) contacts NAD(+). Residues R97 and R103 each contribute to the substrate site. NAD(+) contacts are provided by residues N110, Q117, and 134–136 (VGN). 2 residues coordinate substrate: N136 and R167. H192 (proton acceptor) is an active-site residue.

The protein belongs to the LDH/MDH superfamily. MDH type 2 family.

It catalyses the reaction (S)-malate + NAD(+) = oxaloacetate + NADH + H(+). Catalyzes the reversible oxidation of malate to oxaloacetate. The sequence is that of Malate dehydrogenase from Nocardia farcinica (strain IFM 10152).